Here is a 309-residue protein sequence, read N- to C-terminus: Mitochondrial import receptor subunit TOM34 (309 aa).

Serine 8 carries the post-translational modification Phosphoserine. 3 TPR repeats span residues 9-42 (VEELRAAGNESFRNGQYAEASALYGRALRVLQAQ), 51-84 (SVLYSNRAACHLKDGNCRDCIKDCTSALALVPFS), and 86-118 (KPLLRRASAYEALEKYPMAYVDYKTVLQIDDNV). A Phosphoserine modification is found at serine 160. The disordered stretch occupies residues 161–189 (LPSENHKEMAKSKSKETTATKNRVPSAGD). A compositionally biased stretch (basic and acidic residues) spans 164–178 (ENHKEMAKSKSKETT). Phosphoserine is present on serine 186. TPR repeat units follow at residues 193-226 (ARVLKEEGNELVKKGNHKKAIEKYSESLLCSNLE), 227-260 (SATYSNRALCYLVLKQYTEAVKDCTEALKLDGKN), and 262-294 (KAFYRRAQAHKALKDYKSSFADISNLLQIEPRN). A Glycyl lysine isopeptide (Lys-Gly) (interchain with G-Cter in SUMO2) cross-link involves residue lysine 197.

Belongs to the Tom34 family. As to quaternary structure, interacts with HSP90A, VCP, ATP6V1D, KIAA0665, AMPK, and DMAP1 through its TPR repeat. Ubiquitous.

Its subcellular location is the cytoplasm. It localises to the mitochondrion outer membrane. In terms of biological role, plays a role in the import of cytosolically synthesized preproteins into mitochondria. Binds the mature portion of precursor proteins. Interacts with cellular components, and possesses weak ATPase activity. May be a chaperone-like protein that helps to keep newly synthesized precursors in an unfolded import compatible state. This chain is Mitochondrial import receptor subunit TOM34 (TOMM34), found in Homo sapiens (Human).